We begin with the raw amino-acid sequence, 120 residues long: UPF0344 protein LMOf2365_2298 (120 aa).

4 consecutive transmembrane segments (helical) span residues 3–23, 33–53, 62–82, and 92–112; these read GYIH…ALLI, MLQM…IMMV, ILAI…EMLL, and GMFL…GFYL.

It belongs to the UPF0344 family.

The protein resides in the cell membrane. This is UPF0344 protein LMOf2365_2298 from Listeria monocytogenes serotype 4b (strain F2365).